The sequence spans 127 residues: UPF0716 protein YtzA (127 aa).

Transmembrane regions (helical) follow at residues 3–22 (FLFL…FLFL), 26–46 (IGIL…AAAA), 70–90 (AIAD…PGFL), and 93–115 (LAGA…FKWL).

It belongs to the UPF0716 (FxsA) family.

It is found in the cell membrane. The polypeptide is UPF0716 protein YtzA (ytzA) (Bacillus subtilis (strain 168)).